Reading from the N-terminus, the 287-residue chain is Light-independent protochlorophyllide reductase iron-sulfur ATP-binding protein (287 aa).

ATP contacts are provided by residues Gly-10–Thr-15 and Lys-39. Ser-14 provides a ligand contact to Mg(2+). Residues Cys-95 and Cys-129 each coordinate [4Fe-4S] cluster. Asn-181–Arg-182 serves as a coordination point for ATP.

This sequence belongs to the NifH/BchL/ChlL family. Homodimer. Protochlorophyllide reductase is composed of three subunits; BchL, BchN and BchB. The cofactor is [4Fe-4S] cluster.

It carries out the reaction chlorophyllide a + oxidized 2[4Fe-4S]-[ferredoxin] + 2 ADP + 2 phosphate = protochlorophyllide a + reduced 2[4Fe-4S]-[ferredoxin] + 2 ATP + 2 H2O. The protein operates within porphyrin-containing compound metabolism; bacteriochlorophyll biosynthesis (light-independent). Its function is as follows. Component of the dark-operative protochlorophyllide reductase (DPOR) that uses Mg-ATP and reduced ferredoxin to reduce ring D of protochlorophyllide (Pchlide) to form chlorophyllide a (Chlide). This reaction is light-independent. The L component serves as a unique electron donor to the NB-component of the complex, and binds Mg-ATP. This chain is Light-independent protochlorophyllide reductase iron-sulfur ATP-binding protein, found in Heliobacterium modesticaldum (strain ATCC 51547 / Ice1).